Reading from the N-terminus, the 681-residue chain is Transketolase 2 (681 aa).

A substrate-binding site is contributed by H30. Thiamine diphosphate contacts are provided by residues H69 and 116–118 (GPL). D157 contributes to the Mg(2+) binding site. Residues G158 and N187 each coordinate thiamine diphosphate. Mg(2+)-binding residues include N187 and I189. Residues H263, R359, and S386 each coordinate substrate. Thiamine diphosphate is bound at residue H263. Residues E418 and F445 each coordinate thiamine diphosphate. The active-site Proton donor is E418. The substrate site is built by H469, D477, and R528.

The protein belongs to the transketolase family. Homodimer. Mg(2+) is required as a cofactor. Requires Ca(2+) as cofactor. Mn(2+) serves as cofactor. It depends on Co(2+) as a cofactor. The cofactor is thiamine diphosphate.

The catalysed reaction is D-sedoheptulose 7-phosphate + D-glyceraldehyde 3-phosphate = aldehydo-D-ribose 5-phosphate + D-xylulose 5-phosphate. Catalyzes the transfer of a two-carbon ketol group from a ketose donor to an aldose acceptor, via a covalent intermediate with the cofactor thiamine pyrophosphate. The chain is Transketolase 2 (TKL2) from Saccharomyces cerevisiae (strain ATCC 204508 / S288c) (Baker's yeast).